Reading from the N-terminus, the 279-residue chain is tRNA uridine(34) hydroxylase (279 aa).

The region spanning 126-221 (TKPGMHVIDT…YLQSVKGADS (96 aa)) is the Rhodanese domain. Cys-181 (cysteine persulfide intermediate) is an active-site residue.

It belongs to the TrhO family.

It carries out the reaction uridine(34) in tRNA + AH2 + O2 = 5-hydroxyuridine(34) in tRNA + A + H2O. Functionally, catalyzes oxygen-dependent 5-hydroxyuridine (ho5U) modification at position 34 in tRNAs. This Anaplasma phagocytophilum (strain HZ) protein is tRNA uridine(34) hydroxylase.